Here is a 244-residue protein sequence, read N- to C-terminus: Phosphonates import ATP-binding protein PhnC 2 (244 aa).

The ABC transporter domain occupies 3-242 (LRVEGLKKVY…ELTDYTVDQL (240 aa)). 36-43 (GPSGAGKS) provides a ligand contact to ATP.

This sequence belongs to the ABC transporter superfamily. Phosphonates importer (TC 3.A.1.9.1) family. In terms of assembly, the complex is composed of two ATP-binding proteins (PhnC), two transmembrane proteins (PhnE) and a solute-binding protein (PhnD).

The protein resides in the cell membrane. The catalysed reaction is phosphonate(out) + ATP + H2O = phosphonate(in) + ADP + phosphate + H(+). In terms of biological role, part of the ABC transporter complex PhnCDE involved in phosphonates import. Responsible for energy coupling to the transport system. The sequence is that of Phosphonates import ATP-binding protein PhnC 2 from Halalkalibacterium halodurans (strain ATCC BAA-125 / DSM 18197 / FERM 7344 / JCM 9153 / C-125) (Bacillus halodurans).